Consider the following 79-residue polypeptide: Small ribosomal subunit protein bS18c (79 aa).

The protein belongs to the bacterial ribosomal protein bS18 family. As to quaternary structure, part of the 30S ribosomal subunit.

It localises to the plastid. Its subcellular location is the chloroplast. The protein is Small ribosomal subunit protein bS18c of Physcomitrium patens (Spreading-leaved earth moss).